The primary structure comprises 290 residues: Transcription cofactor vestigial-like protein 4 (290 aa).

Met1 carries the N-acetylmethionine modification. Over residues 17 to 30 (ADDEKREAALRGEP) the composition is skewed to basic and acidic residues. Disordered stretches follow at residues 17 to 65 (ADDE…PGDE), 85 to 106 (LNKT…SPIE), 140 to 161 (LDAS…QQNR), and 254 to 290 (AAKD…SVVS). Ser52 carries the post-translational modification Phosphoserine. Residues 92-105 (DCRRDPRERSRSPI) show a composition bias toward basic and acidic residues. Ser149 is modified (phosphoserine). Positions 150–161 (PTLTPGERQQNR) are enriched in polar residues. Thr153 is modified (phosphothreonine). Low complexity predominate over residues 272 to 290 (PASPSAHMVSHSHSPSVVS). A Phosphoserine modification is found at Ser274.

This sequence belongs to the vestigial family. In terms of assembly, interacts with TEFs. Interacts with IRF2BP2.

It is found in the nucleus. Its function is as follows. May act as a specific coactivator for the mammalian TEFs. This chain is Transcription cofactor vestigial-like protein 4, found in Homo sapiens (Human).